Here is a 433-residue protein sequence, read N- to C-terminus: Histone deacetylase RPD3 (433 aa).

The histone deacetylase stretch occupies residues 19–331; it reads RRVAYFYDAD…WCFETGLLNN (313 aa). The active site involves histidine 151. The short motif at 320–340 is the ESA1-RPD3 motif element; the sequence is RTWCFETGLLNNVVLDKDLPY. The tract at residues 388-433 is disordered; that stretch reads SVQLNHTPRDAEDLGDVEEDSAEAKDTKGGSQYARDLHVEHDNEFY. Residue threonine 394 is modified to Phosphothreonine. Serine 408 carries the post-translational modification Phosphoserine. Over residues 422–433 the composition is skewed to basic and acidic residues; sequence RDLHVEHDNEFY.

Belongs to the histone deacetylase family. HD type 1 subfamily. In terms of assembly, component of the RPD3C(L) complex composed of at least ASH1, CTI6, DEP1, PHO23, RPD3, RXT2, RXT3, SAP30, SDS3, SIN3, UME1 and UME6. Component of the RPD3C(S) complex composed of at least EAF3, RCO1, RPD3, SIN3, and UME1. Interacts with cyclophilins CPR1, CPR6 and CPR7, with the kinase HOG1, and with ESS1, CYC8 and HAC1.

The protein localises to the cytoplasm. Its subcellular location is the nucleus. It catalyses the reaction N(6)-acetyl-L-lysyl-[histone] + H2O = L-lysyl-[histone] + acetate. Catalytic component of the RPD3 histone deacetylase (HDAC) complexes RPD3C(L) and RPD3C(S) responsible for the deacetylation of lysine residues on the N-terminal part of the core histones (H2A, H2B, H3 and H4). Histone deacetylation plays an important role in transcriptional regulation, cell cycle progression, DNA damage response, osmotic stress response and developmental events. Is involved in rDNA and telomere silencing and in double strand breaks repair. Required for both full transcription repression and activation of many genes including cell type-specific genes (STE6, TY2 and HO), cell differentiation-specific genes (SPO13), genes that respond to external signals (PHO5) and TRK2. The RPD3 complexes regulate also chromosomal replication timing. This Saccharomyces cerevisiae (strain ATCC 204508 / S288c) (Baker's yeast) protein is Histone deacetylase RPD3 (RPD3).